A 497-amino-acid polypeptide reads, in one-letter code: Delayed-rectifier potassium channel regulatory subunit KCNS1 (497 aa).

Topologically, residues 1–186 (MVSEFPGPGS…LTMENPGYSL (186 aa)) are cytoplasmic. Residues 187-208 (PSKLFSCVSIGVVLASIAAMCI) traverse the membrane as a helical segment. Over 209-239 (HSLPEYQAREAAAAVAAVAAGRSAEDVRDDP) the chain is Extracellular. Residues 240–262 (VLRRLEYFCIAWFSFEVSSRLLL) form a helical membrane-spanning segment. Over 263–273 (APSTRNFFCHP) the chain is Cytoplasmic. A helical membrane pass occupies residues 274-291 (LNLIDIVSVLPFYLTLLA). Residues 292–309 (GAALGDRRGASGEELGDL) are Extracellular-facing. A helical; Voltage-sensor membrane pass occupies residues 310–330 (GKVVQVFRLMRIFRVLKLARH). The Cytoplasmic segment spans residues 331–345 (STGLRSLGATLKHSY). Residues 346 to 367 (REVGILLLYLAVGVSVFSGVAY) form a helical membrane-spanning segment. Residues 368–379 (TAEEKNVGFDTI) lie on the Extracellular side of the membrane. Positions 380–391 (PACWWWGTVSMT) form an intramembrane region, helical. Positions 392–397 (TVGYGD) match the Selectivity filter motif. The stretch at 392–399 (TVGYGDVV) is an intramembrane region. Topologically, residues 400-406 (PETVAGK) are extracellular. A helical transmembrane segment spans residues 407-435 (LAASGCILGGILVVALPITIIFNKFSHFY). Residues 436 to 497 (RRQKALEAAV…PSEPAKSHSY (62 aa)) are Cytoplasmic-facing. The interval 464-497 (SDVSLETSRETSQEGRSTDLETQAPSEPAKSHSY) is disordered. Residues 470-482 (TSRETSQEGRSTD) are compositionally biased toward basic and acidic residues.

It belongs to the potassium channel family. S (TC 1.A.1.2) subfamily. Kv9.1/KCNS1 sub-subfamily. As to quaternary structure, heterotetramer with KCNB1. Heterotetramer with KCNB2. Does not form homomultimers. Highly expressed in brain, but not in the other tissues tested.

It localises to the cell membrane. In terms of biological role, potassium channel regulatory subunit that modulate the delayed rectifier voltage-gated potassium channel activity of KCNB1 and KCNB2 by altering their kinetics, expression levels, and shifting the half-inactivation potential to more polarized values. While it does not form functional channels on its own, it can form functional heterotetrameric channels with KCNB1 and KCNB2. Each regulatory subunit has unique regulatory properties that can lead to extensive inhibition, significant changes in kinetics, and/or substantial shifts in the voltage dependencies of the inactivation process. The chain is Delayed-rectifier potassium channel regulatory subunit KCNS1 from Rattus norvegicus (Rat).